The sequence spans 856 residues: Leucine--tRNA ligase (856 aa).

A 'HIGH' region motif is present at residues 42 to 52; that stretch reads PYPSGNLHMGH. Positions 617-621 match the 'KMSKS' region motif; it reads KMSKS. Lys620 is an ATP binding site.

The protein belongs to the class-I aminoacyl-tRNA synthetase family.

The protein localises to the cytoplasm. The enzyme catalyses tRNA(Leu) + L-leucine + ATP = L-leucyl-tRNA(Leu) + AMP + diphosphate. The chain is Leucine--tRNA ligase from Rippkaea orientalis (strain PCC 8801 / RF-1) (Cyanothece sp. (strain PCC 8801)).